The primary structure comprises 148 residues: Putative carbonic anhydrase (148 aa).

Residues 1–146 (CLKRLQPGEM…LNGRTVFEVH (146 aa)) enclose the Alpha-carbonic anhydrase domain.

Belongs to the alpha-carbonic anhydrase family. The cofactor is Zn(2+). In terms of tissue distribution, component of the acid-insoluble organic matrix of the aragonitic skeleton (at protein level).

It is found in the secreted. It carries out the reaction hydrogencarbonate + H(+) = CO2 + H2O. Reversible hydration of carbon dioxide. This is Putative carbonic anhydrase from Acropora millepora (Staghorn coral).